A 162-amino-acid polypeptide reads, in one-letter code: NADH-ubiquinone oxidoreductase subunit 8 (162 aa).

2 4Fe-4S ferredoxin-type domains span residues 54–83 (RRYQ…IESE) and 93–122 (TRYD…EGPN). Residues C63, C66, C69, C73, C102, C105, C108, and C112 each coordinate [4Fe-4S] cluster.

This sequence belongs to the complex I 23 kDa subunit family. [4Fe-4S] cluster is required as a cofactor.

Its subcellular location is the mitochondrion. The enzyme catalyses a ubiquinone + NADH + 5 H(+)(in) = a ubiquinol + NAD(+) + 4 H(+)(out). Core subunit of the mitochondrial membrane respiratory chain NADH dehydrogenase (Complex I) that is believed to belong to the minimal assembly required for catalysis. Complex I functions in the transfer of electrons from NADH to the respiratory chain. The immediate electron acceptor for the enzyme is believed to be ubiquinone. May donate electrons to ubiquinone. This Reclinomonas americana protein is NADH-ubiquinone oxidoreductase subunit 8 (NAD8).